The chain runs to 151 residues: S-protein homolog 74 (151 aa).

Residues 1 to 25 (MNYIKQFILAICFYLVLTCQDHVLA) form the signal peptide.

Belongs to the plant self-incompatibility (S1) protein family.

It localises to the secreted. This chain is S-protein homolog 74, found in Arabidopsis thaliana (Mouse-ear cress).